A 593-amino-acid polypeptide reads, in one-letter code: 2-succinyl-5-enolpyruvyl-6-hydroxy-3-cyclohexene-1-carboxylate synthase (593 aa).

The protein belongs to the TPP enzyme family. MenD subfamily. As to quaternary structure, homodimer. Requires Mg(2+) as cofactor. It depends on Mn(2+) as a cofactor. The cofactor is thiamine diphosphate.

The catalysed reaction is isochorismate + 2-oxoglutarate + H(+) = 5-enolpyruvoyl-6-hydroxy-2-succinyl-cyclohex-3-ene-1-carboxylate + CO2. It functions in the pathway quinol/quinone metabolism; 1,4-dihydroxy-2-naphthoate biosynthesis; 1,4-dihydroxy-2-naphthoate from chorismate: step 2/7. Its pathway is quinol/quinone metabolism; menaquinone biosynthesis. Its function is as follows. Catalyzes the thiamine diphosphate-dependent decarboxylation of 2-oxoglutarate and the subsequent addition of the resulting succinic semialdehyde-thiamine pyrophosphate anion to isochorismate to yield 2-succinyl-5-enolpyruvyl-6-hydroxy-3-cyclohexene-1-carboxylate (SEPHCHC). In Pelodictyon phaeoclathratiforme (strain DSM 5477 / BU-1), this protein is 2-succinyl-5-enolpyruvyl-6-hydroxy-3-cyclohexene-1-carboxylate synthase.